The following is a 182-amino-acid chain: ATP synthase subunit delta (182 aa).

Belongs to the ATPase delta chain family. In terms of assembly, F-type ATPases have 2 components, F(1) - the catalytic core - and F(0) - the membrane proton channel. F(1) has five subunits: alpha(3), beta(3), gamma(1), delta(1), epsilon(1). CF(0) has four main subunits: a(1), b(1), b'(1) and c(10-14). The alpha and beta chains form an alternating ring which encloses part of the gamma chain. F(1) is attached to F(0) by a central stalk formed by the gamma and epsilon chains, while a peripheral stalk is formed by the delta, b and b' chains.

Its subcellular location is the cellular thylakoid membrane. F(1)F(0) ATP synthase produces ATP from ADP in the presence of a proton or sodium gradient. F-type ATPases consist of two structural domains, F(1) containing the extramembraneous catalytic core and F(0) containing the membrane proton channel, linked together by a central stalk and a peripheral stalk. During catalysis, ATP synthesis in the catalytic domain of F(1) is coupled via a rotary mechanism of the central stalk subunits to proton translocation. In terms of biological role, this protein is part of the stalk that links CF(0) to CF(1). It either transmits conformational changes from CF(0) to CF(1) or is implicated in proton conduction. The protein is ATP synthase subunit delta of Prochlorococcus marinus (strain MIT 9211).